The chain runs to 320 residues: Aspartate carbamoyltransferase catalytic subunit (320 aa).

Positions 58 and 59 each coordinate carbamoyl phosphate. Lys-86 contacts L-aspartate. Arg-108, His-136, and Gln-139 together coordinate carbamoyl phosphate. 2 residues coordinate L-aspartate: Arg-169 and Arg-223. Gly-264 and Pro-265 together coordinate carbamoyl phosphate.

This sequence belongs to the aspartate/ornithine carbamoyltransferase superfamily. ATCase family. As to quaternary structure, heterododecamer (2C3:3R2) of six catalytic PyrB chains organized as two trimers (C3), and six regulatory PyrI chains organized as three dimers (R2).

It catalyses the reaction carbamoyl phosphate + L-aspartate = N-carbamoyl-L-aspartate + phosphate + H(+). Its pathway is pyrimidine metabolism; UMP biosynthesis via de novo pathway; (S)-dihydroorotate from bicarbonate: step 2/3. In terms of biological role, catalyzes the condensation of carbamoyl phosphate and aspartate to form carbamoyl aspartate and inorganic phosphate, the committed step in the de novo pyrimidine nucleotide biosynthesis pathway. The sequence is that of Aspartate carbamoyltransferase catalytic subunit from Cereibacter sphaeroides (strain ATCC 17029 / ATH 2.4.9) (Rhodobacter sphaeroides).